Reading from the N-terminus, the 144-residue chain is MTIERTFSIVKPDAVKRNLIGAIYRRIEKTGMQIVAAKMLRLTKEQAEGFYAEHEGKEFFDELVAYMMSGPVMVQVLEGENAVVRYRELMGKTNPEEAACGSLRADYAISMRYNSVHGADSPESAAREIAYFFAEDEICPRPVE.

Residues K11, F59, R87, T93, R104, and N114 each contribute to the ATP site. Catalysis depends on H117, which acts as the Pros-phosphohistidine intermediate.

Belongs to the NDK family. As to quaternary structure, homotetramer. Requires Mg(2+) as cofactor.

The protein localises to the cytoplasm. It carries out the reaction a 2'-deoxyribonucleoside 5'-diphosphate + ATP = a 2'-deoxyribonucleoside 5'-triphosphate + ADP. The catalysed reaction is a ribonucleoside 5'-diphosphate + ATP = a ribonucleoside 5'-triphosphate + ADP. In terms of biological role, major role in the synthesis of nucleoside triphosphates other than ATP. The ATP gamma phosphate is transferred to the NDP beta phosphate via a ping-pong mechanism, using a phosphorylated active-site intermediate. The protein is Nucleoside diphosphate kinase of Aliivibrio fischeri (strain MJ11) (Vibrio fischeri).